Reading from the N-terminus, the 76-residue chain is Nemertide alpha-1 (76 aa).

The N-terminal stretch at 1-28 (YRIASSSIAKMKTAVFLVGLLFLGLVFA) is a signal peptide. The propeptide occupies 29-44 (DEAAIDSEFDQSIDKR). 3 disulfides stabilise this stretch: Cys46/Cys60, Cys53/Cys64, and Cys59/Cys70. Pro72 and Pro73 each carry 4-hydroxyproline.

The protein belongs to the nemertide family. As to expression, confined to the epidermis and to the mucus layer.

Its subcellular location is the secreted. Its function is as follows. Highly potent toxin against insect sodium channel (Nav) and with less potent activity against mammalian sodium channels. Potently inhibits inactivation of insect sodium channels of B.germanica (BgNav1) (EC(50)=8.6 nM), D.melanogaster (Dm Nav1), and arachnid sodium channel V.destructor (VdNav1). Also delays the inactivation of most mammalian Nav channels tested (human Nav1.1/SCN1A; EC(50)=124.1 nM, rat Nav1.2/SCN2A; EC(50)=359.6 nM, rat Nav1.3/SCN3A; EC(50)=135.4 nM, rat Nav1.4/SCN4A; EC(50)=145.5 nM, human Nav1.5/SCN5A; EC(50)=138.3 nM, mouse Nav1.6/SCN8A; EC(50)=240.4 nM, human Nav1.9/SCN9A; EC(50)=76.5 nM). 1 uM is enough to completely inhibits the inactivation, resulting in sustained non-inactivating currents. In addition, the toxin significantly enhances the recovery from inactivation, and the open state is not required for the toxin to interact with the channel. In vivo, injection into green crabs (Carcinus maenas at 1 mug/kg) of small doses (1-5 ug/kg) results in slow and fast permanent paralysis, whereas injection of high doses (more than 10 ug/kg) causes death. Injection into juvenile Blaptica dubia cockroaches results in death or permanent paralysis at doses higher than 7.1 ug/kg. Injection into brine shrimp (Artemia salina) stops movement or causes death after 24 hours (EC(50)=0.3 uM). In the rare inherited cardiac arrhythmia Brugada syndrome 1 (BRGDA1), this toxin is able to restore the loss of function by reducing channel inactivation, without affecting activation, by binding to Nav1.5/SCN5A. This Lineus lacteus (Ribbon worm) protein is Nemertide alpha-1.